A 187-amino-acid chain; its full sequence is Cytochrome b-245 chaperone 1 (187 aa).

Residues 20–42 (GIRSWSLLVGILSTGLAAAYYSG) traverse the membrane as a helical segment. Residues 167-187 (ESPSERSQSSDSEPDGPGGQS) are disordered. Residues Ser168 and Ser170 each carry the phosphoserine modification.

It belongs to the CYBC1 family. Interacts with CYBB; CYBC1 may act as a chaperone stabilizing Cytochrome b-245 heterodimer.

It localises to the endoplasmic reticulum membrane. In terms of biological role, functions as a chaperone necessary for a stable expression of the CYBA and CYBB subunits of the cytochrome b-245 heterodimer. Controls the phagocyte respiratory burst and is essential for innate immunity. The chain is Cytochrome b-245 chaperone 1 from Rattus norvegicus (Rat).